Here is a 461-residue protein sequence, read N- to C-terminus: DNA polymerase delta subunit 3 (461 aa).

Disordered stretches follow at residues 148–229, 249–380, and 399–461; these read VAQA…SAKG, VPGQ…KRVL, and YESE…CQKK. The span at 155–172 shows a compositional bias: polar residues; the sequence is ARSSSQTPSDTSAVSTPP. Over residues 205-214 the composition is skewed to basic and acidic residues; the sequence is DANKEPKAKE. Over residues 215–228 the composition is skewed to low complexity; the sequence is APSVSAASSKPSAK. The segment covering 279-304 has biased composition (basic and acidic residues); sequence KPGRKTEPAKIQQKDKKSKMKRMDKS. Over residues 371–380 the composition is skewed to basic residues; sequence GKKRKRKRVL. Residues 427–436 show a composition bias toward basic and acidic residues; that stretch reads VKKEPKEERK. The PIP-box signature appears at 451 to 458; sequence QISIMGFC.

Component of both the DNA polymerase delta and DNA polymerase zeta complexes. The tetrameric DNA polymerase delta complex (Pol-delta4), which consists of POLD1/p125, POLD2/p50, POLD3/p66/p68 and POLD4/p12, with POLD1 bearing DNA polymerase and 3' to 5' proofreading exonuclease activities.

It is found in the cytoplasm. Its subcellular location is the nucleus. In terms of biological role, accessory component of both the DNA polymerase delta complex and the DNA polymerase zeta complex. As a component of the trimeric and tetrameric DNA polymerase delta complexes (Pol-delta3 and Pol-delta4, respectively), plays a role in high fidelity genome replication, including in lagging strand synthesis, and repair. Required for optimal Pol-delta activity. Stabilizes the Pol-delta complex and plays a major role in Pol-delta stimulation by PCNA. Pol-delta3 and Pol-delta4 are characterized by the absence or the presence of POLD4. They exhibit differences in catalytic activity. Most notably, Pol-delta3 shows higher proofreading activity than Pol-delta4. Although both Pol-delta3 and Pol-delta4 process Okazaki fragments in vitro, Pol-delta3 may also be better suited to fulfill this task, exhibiting near-absence of strand displacement activity compared to Pol-delta4 and stalling on encounter with the 5'-blocking oligonucleotides. Pol-delta3 idling process may avoid the formation of a gap, while maintaining a nick that can be readily ligated. Along with DNA polymerase kappa, DNA polymerase delta carries out approximately half of nucleotide excision repair (NER) synthesis following UV irradiation. In this context, POLD3, along with PCNA and RFC1-replication factor C complex, is required to recruit POLD1, the catalytic subunit of the polymerase delta complex, to DNA damage sites. Under conditions of DNA replication stress, required for the repair of broken replication forks through break-induced replication (BIR). Involved in the translesion synthesis (TLS) of templates carrying O6-methylguanine or abasic sites performed by Pol-delta4, independently of DNA polymerase zeta (REV3L) or eta (POLH). Facilitates abasic site bypass by DNA polymerase delta by promoting extension from the nucleotide inserted opposite the lesion. Also involved in TLS, as a component of the tetrameric DNA polymerase zeta complex. Along with POLD2, dramatically increases the efficiency and processivity of DNA synthesis of the DNA polymerase zeta complex compared to the minimal zeta complex, consisting of only REV3L and REV7. The protein is DNA polymerase delta subunit 3 (POLD3) of Gallus gallus (Chicken).